The sequence spans 368 residues: MSLYPIYNFSAGPAVLPEAVLETARQEMLDYNGTGFPVMAMSHRSEMFLSILHHAEQDLRQLLKVPDNYKILFLQGGATTQFNMAAMNLAHGFRTADAVVTGNWSRIAYEQMSRLTDTEIRLAAHGGEQFDYLDLPPVETWDVAPDSAFVHFAVNETVNGLQYREVPCLSEGMPPLVCDMSSEILSREFDVADYGLIYAGAQKNIGPAGVTVVIVREDLLERCPNDIPDVFNYRSHINRDGMYNTPSTYAIYMSGLVFRWLQAQGGVKKIEAVNRLKAQTLYETIDGSDGFYINRIRPNARSKMNVVFQTGDEELDRRFVLEAELQGLCLLKGYKTVGGMRASIYNAMPLEGVRALADFMRDFQRRYG.

Arginine 44 contacts L-glutamate. Residues 78–79, tryptophan 104, threonine 157, aspartate 179, and glutamine 202 contribute to the pyridoxal 5'-phosphate site; that span reads AT. Lysine 203 carries the N6-(pyridoxal phosphate)lysine modification. Residue 244–245 coordinates pyridoxal 5'-phosphate; that stretch reads NT.

The protein belongs to the class-V pyridoxal-phosphate-dependent aminotransferase family. SerC subfamily. As to quaternary structure, homodimer. The cofactor is pyridoxal 5'-phosphate.

Its subcellular location is the cytoplasm. It catalyses the reaction O-phospho-L-serine + 2-oxoglutarate = 3-phosphooxypyruvate + L-glutamate. The catalysed reaction is 4-(phosphooxy)-L-threonine + 2-oxoglutarate = (R)-3-hydroxy-2-oxo-4-phosphooxybutanoate + L-glutamate. Its pathway is amino-acid biosynthesis; L-serine biosynthesis; L-serine from 3-phospho-D-glycerate: step 2/3. It functions in the pathway cofactor biosynthesis; pyridoxine 5'-phosphate biosynthesis; pyridoxine 5'-phosphate from D-erythrose 4-phosphate: step 3/5. Its function is as follows. Catalyzes the reversible conversion of 3-phosphohydroxypyruvate to phosphoserine and of 3-hydroxy-2-oxo-4-phosphonooxybutanoate to phosphohydroxythreonine. This chain is Phosphoserine aminotransferase, found in Neisseria meningitidis serogroup B (strain ATCC BAA-335 / MC58).